The chain runs to 350 residues: S-adenosylmethionine:tRNA ribosyltransferase-isomerase (350 aa).

The protein belongs to the QueA family. Monomer.

The protein localises to the cytoplasm. It catalyses the reaction 7-aminomethyl-7-carbaguanosine(34) in tRNA + S-adenosyl-L-methionine = epoxyqueuosine(34) in tRNA + adenine + L-methionine + 2 H(+). The protein operates within tRNA modification; tRNA-queuosine biosynthesis. In terms of biological role, transfers and isomerizes the ribose moiety from AdoMet to the 7-aminomethyl group of 7-deazaguanine (preQ1-tRNA) to give epoxyqueuosine (oQ-tRNA). The polypeptide is S-adenosylmethionine:tRNA ribosyltransferase-isomerase (Bacillus cereus (strain G9842)).